Here is a 192-residue protein sequence, read N- to C-terminus: RNA pyrophosphohydrolase (192 aa).

Residues 6-149 form the Nudix hydrolase domain; that stretch reads GYRPNVGIVI…KKDVYRKVMK (144 aa). The Nudix box motif lies at 38 to 59; the sequence is GGINDNETAEQAMYRELYEEAG.

This sequence belongs to the Nudix hydrolase family. RppH subfamily. A divalent metal cation is required as a cofactor.

Accelerates the degradation of transcripts by removing pyrophosphate from the 5'-end of triphosphorylated RNA, leading to a more labile monophosphorylated state that can stimulate subsequent ribonuclease cleavage. The protein is RNA pyrophosphohydrolase of Histophilus somni (strain 129Pt) (Haemophilus somnus).